A 956-amino-acid polypeptide reads, in one-letter code: DNA polymerase I (956 aa).

The 5'-3' exonuclease domain maps to 209-296 (VTVRQWVDYR…VTDLPLDIEF (88 aa)).

It belongs to the DNA polymerase type-A family. As to quaternary structure, single-chain monomer with multiple functions.

The enzyme catalyses DNA(n) + a 2'-deoxyribonucleoside 5'-triphosphate = DNA(n+1) + diphosphate. Its function is as follows. A DNA polymerase, required for DNA repair after DNA damage induced by ionizing radiation (IR); this is not the major DNA polymerase. Following severe irradiation (7 kGy of gamma irradiation) genomic DNA is fragmented. DNA is progressively degraded for the first 1.5 hours after IR, in a step promoted by RecA and counterbalanced by DNA Pol I and Pol III, followed by massive DNA synthesis and genome reassembly in the next hour. Optimal priming of DNA synthesis requires both RecA and RadA, Pol III initiates DNA synthesis while both Pol I and Pol III are required for its continuation. May also have 5'-3' exonuclease activity. The chain is DNA polymerase I (polA) from Deinococcus radiodurans (strain ATCC 13939 / DSM 20539 / JCM 16871 / CCUG 27074 / LMG 4051 / NBRC 15346 / NCIMB 9279 / VKM B-1422 / R1).